The primary structure comprises 292 residues: G1/S-specific cyclin-D3 (292 aa).

A Cyclin N-terminal domain is found at 27–152 (VLQSLLRLEE…LVLGKLKWDL (126 aa)). Residues 256-292 (REAAQTAPSPVPKAPRGSSSQGPSQTSTPTDVTAIHL) form a disordered region. Residues Ser264 and Ser279 each carry the phosphoserine modification. Residues 272–285 (GSSSQGPSQTSTPT) show a composition bias toward low complexity. Thr283 bears the Phosphothreonine mark.

It belongs to the cyclin family. Cyclin D subfamily. In terms of assembly, interacts with the CDK4 and CDK6 protein kinases to form a serine/threonine kinase holoenzyme complex. The cyclin subunit imparts substrate specificity to the complex. Interacts with ATF5. Interacts with EIF3K. Component of the ternary complex cyclin D/CDK4/CDKN1B required for nuclear translocation and modulation of CDK4-mediated kinase activity. Can form similar complexes with either CDKN1A or CDKN2A. Phosphorylation at Thr-283 by MAP kinases is required for ubiquitination and degradation by the DCX(AMBRA1) complex. In terms of processing, ubiquitinated by the DCX(AMBRA1) complex during the transition from G1 to S cell phase, leading to its degradation: ubiquitination is dependent on Thr-283 phosphorylation. The DCX(AMBRA1) complex represents the major regulator of CCND3 stability during the G1/S transition. Polyubiquitinated by the SCF(FBXL2) complex, leading to proteasomal degradation.

Its subcellular location is the nucleus. The protein resides in the cytoplasm. In terms of biological role, regulatory component of the cyclin D3-CDK4 (DC) complex that phosphorylates and inhibits members of the retinoblastoma (RB) protein family including RB1 and regulates the cell-cycle during G(1)/S transition. Phosphorylation of RB1 allows dissociation of the transcription factor E2F from the RB/E2F complex and the subsequent transcription of E2F target genes which are responsible for the progression through the G(1) phase. Hypophosphorylates RB1 in early G(1) phase. Cyclin D-CDK4 complexes are major integrators of various mitogenenic and antimitogenic signals. Component of the ternary complex, cyclin D3/CDK4/CDKN1B, required for nuclear translocation and activity of the cyclin D-CDK4 complex. Shows transcriptional coactivator activity with ATF5 independently of CDK4. The sequence is that of G1/S-specific cyclin-D3 from Mus musculus (Mouse).